Reading from the N-terminus, the 299-residue chain is uncharacterized protein (299 aa).

The protein belongs to the glycosyltransferase 2 family.

This is an uncharacterized protein from Mycoplasma pneumoniae (strain ATCC 29342 / M129 / Subtype 1) (Mycoplasmoides pneumoniae).